The sequence spans 224 residues: Phosphoribosylformylglycinamidine synthase subunit PurQ (224 aa).

A Glutamine amidotransferase type-1 domain is found at 2–224; the sequence is KVTILQFPGT…IKMLQGFLRA (223 aa). Residue C86 is the Nucleophile of the active site. Residues H200 and E202 contribute to the active site.

As to quaternary structure, part of the FGAM synthase complex composed of 1 PurL, 1 PurQ and 2 PurS subunits.

It localises to the cytoplasm. The catalysed reaction is N(2)-formyl-N(1)-(5-phospho-beta-D-ribosyl)glycinamide + L-glutamine + ATP + H2O = 2-formamido-N(1)-(5-O-phospho-beta-D-ribosyl)acetamidine + L-glutamate + ADP + phosphate + H(+). The enzyme catalyses L-glutamine + H2O = L-glutamate + NH4(+). Its pathway is purine metabolism; IMP biosynthesis via de novo pathway; 5-amino-1-(5-phospho-D-ribosyl)imidazole from N(2)-formyl-N(1)-(5-phospho-D-ribosyl)glycinamide: step 1/2. Functionally, part of the phosphoribosylformylglycinamidine synthase complex involved in the purines biosynthetic pathway. Catalyzes the ATP-dependent conversion of formylglycinamide ribonucleotide (FGAR) and glutamine to yield formylglycinamidine ribonucleotide (FGAM) and glutamate. The FGAM synthase complex is composed of three subunits. PurQ produces an ammonia molecule by converting glutamine to glutamate. PurL transfers the ammonia molecule to FGAR to form FGAM in an ATP-dependent manner. PurS interacts with PurQ and PurL and is thought to assist in the transfer of the ammonia molecule from PurQ to PurL. The protein is Phosphoribosylformylglycinamidine synthase subunit PurQ of Sulfurimonas denitrificans (strain ATCC 33889 / DSM 1251) (Thiomicrospira denitrificans (strain ATCC 33889 / DSM 1251)).